The primary structure comprises 120 residues: NAD(P)H-quinone oxidoreductase subunit 3, chloroplastic (120 aa).

The next 3 membrane-spanning stretches (helical) occupy residues 7–27, 64–84, and 88–108; these read YDTF…AFSI, MFAL…PWAM, and ILGL…IVGL.

It belongs to the complex I subunit 3 family. NDH is composed of at least 16 different subunits, 5 of which are encoded in the nucleus.

It is found in the plastid. Its subcellular location is the chloroplast thylakoid membrane. It carries out the reaction a plastoquinone + NADH + (n+1) H(+)(in) = a plastoquinol + NAD(+) + n H(+)(out). The enzyme catalyses a plastoquinone + NADPH + (n+1) H(+)(in) = a plastoquinol + NADP(+) + n H(+)(out). Functionally, NDH shuttles electrons from NAD(P)H:plastoquinone, via FMN and iron-sulfur (Fe-S) centers, to quinones in the photosynthetic chain and possibly in a chloroplast respiratory chain. The immediate electron acceptor for the enzyme in this species is believed to be plastoquinone. Couples the redox reaction to proton translocation, and thus conserves the redox energy in a proton gradient. The protein is NAD(P)H-quinone oxidoreductase subunit 3, chloroplastic of Cryptomeria japonica (Japanese cedar).